A 106-amino-acid chain; its full sequence is MSSLSEYALRMSRLSARLFSEVARPTDSKSMKVVKLFSEQPLAKRKETYDWYPNHNTYFALMGILRSVGLYRDEHQDFKDEQLRLKKLRGKVKPRKGEGKRAAKKK.

Ser2 bears the N-acetylserine mark. Residues 85-94 (LKKLRGKVKP) are compositionally biased toward basic residues. The interval 85 to 106 (LKKLRGKVKPRKGEGKRAAKKK) is disordered. Residues 95 to 106 (RKGEGKRAAKKK) are compositionally biased toward basic and acidic residues.

Belongs to the mitochondrion-specific ribosomal protein mS33 family. In terms of assembly, component of the mitochondrial ribosome small subunit (28S) which comprises a 12S rRNA and about 30 distinct proteins.

It is found in the mitochondrion. This is Small ribosomal subunit protein mS33 from Bos taurus (Bovine).